The chain runs to 326 residues: Protoheme IX farnesyltransferase (326 aa).

The next 8 helical transmembrane spans lie at L35–L55, L60–L80, S106–V126, L129–L149, I157–G177, W185–L205, G242–F262, and A283–L303.

The protein belongs to the UbiA prenyltransferase family. Protoheme IX farnesyltransferase subfamily.

The protein resides in the cell inner membrane. It catalyses the reaction heme b + (2E,6E)-farnesyl diphosphate + H2O = Fe(II)-heme o + diphosphate. The protein operates within porphyrin-containing compound metabolism; heme O biosynthesis; heme O from protoheme: step 1/1. Converts heme B (protoheme IX) to heme O by substitution of the vinyl group on carbon 2 of heme B porphyrin ring with a hydroxyethyl farnesyl side group. This chain is Protoheme IX farnesyltransferase, found in Parasynechococcus marenigrum (strain WH8102).